Consider the following 374-residue polypeptide: 4-hydroxy-3-methylbut-2-en-1-yl diphosphate synthase (flavodoxin) (374 aa).

[4Fe-4S] cluster is bound by residues Cys-268, Cys-271, Cys-303, and Glu-310.

This sequence belongs to the IspG family. The cofactor is [4Fe-4S] cluster.

The enzyme catalyses (2E)-4-hydroxy-3-methylbut-2-enyl diphosphate + oxidized [flavodoxin] + H2O + 2 H(+) = 2-C-methyl-D-erythritol 2,4-cyclic diphosphate + reduced [flavodoxin]. Its pathway is isoprenoid biosynthesis; isopentenyl diphosphate biosynthesis via DXP pathway; isopentenyl diphosphate from 1-deoxy-D-xylulose 5-phosphate: step 5/6. In terms of biological role, converts 2C-methyl-D-erythritol 2,4-cyclodiphosphate (ME-2,4cPP) into 1-hydroxy-2-methyl-2-(E)-butenyl 4-diphosphate. The chain is 4-hydroxy-3-methylbut-2-en-1-yl diphosphate synthase (flavodoxin) from Geobacillus thermodenitrificans (strain NG80-2).